The primary structure comprises 1065 residues: Ceruloplasmin (1065 aa).

Positions 1-19 (MKILILGIFLFLCSTPAWA) are cleaved as a signal peptide. 2 Plastocyanin-like domains span residues 20 to 200 (KEKH…LIIC) and 209 to 357 (KEKH…VQEC). Na(+) is bound by residues Y55, G64, and Y67. Cu(2+) contacts are provided by H120 and H122. H120 is a binding site for O2. K128 lines the Ca(2+) pocket. N138 is a glycosylation site (N-linked (GlcNAc...) (complex) asparagine). Ca(2+) contacts are provided by Q143, D146, and D147. C174 and C200 are joined by a disulfide. Positions 180 and 182 each coordinate Cu(2+). Residue H180 participates in O2 binding. Na(+) is bound at residue S256. C276 and C357 are disulfide-bonded. Residues H295, C338, and H343 each contribute to the Cu(2+) site. Residues N358 and N397 are each glycosylated (N-linked (GlcNAc...) (complex) asparagine). 2 Plastocyanin-like domains span residues 370-560 (HVRH…MKIC) and 570-718 (RQKD…VNQC). Positions 408, 417, and 420 each coordinate Na(+). A disulfide bridge connects residues C534 and C560. A glycan (N-linked (GlcNAc...) asparagine) is linked at N588. S617 provides a ligand contact to Na(+). C637 and C718 form a disulfide bridge. Cu(2+) contacts are provided by H656, C699, H704, and M709. Residue C699 is the Nucleophile; for glutathione peroxidase activity of the active site. Position 722 is a phosphoserine; by FAM20C (S722). Plastocyanin-like domains follow at residues 730–900 (GERT…LIVC) and 908–1061 (FNPR…QNED). A glycan (N-linked (GlcNAc...) (complex) asparagine) is linked at N762. 3 residues coordinate Na(+): F767, G776, and Y779. An intrachain disulfide couples C874 to C900. A glycan (N-linked (GlcNAc...) asparagine) is linked at N926. S955 lines the Na(+) pocket. Residues H994, H997, H999, H1039, C1040, H1041, H1045, and M1050 each coordinate Cu(2+). Residues H997 and H999 each coordinate O2. Residue H1041 participates in O2 binding.

This sequence belongs to the multicopper oxidase family. As to quaternary structure, found in a complex with MPO and LTF; interacts directly with MPO and LTF, which allows Fe(3+) incorporation into LTF, activation of CP ferroxidase activity and protection of CP antioxidant properties by MPO. Requires Cu(2+) as cofactor. As to expression, expressed by the liver and secreted in plasma.

It is found in the secreted. The enzyme catalyses 4 Fe(2+) + O2 + 4 H(+) = 4 Fe(3+) + 2 H2O. It carries out the reaction 4 Cu(+) + O2 + 4 H(+) = 4 Cu(2+) + 2 H2O. The catalysed reaction is a hydroperoxide + 2 glutathione = an alcohol + glutathione disulfide + H2O. It catalyses the reaction 4 nitric oxide + O2 + 2 H2O = 4 nitrite + 4 H(+). The enzyme catalyses 2 glutathione + H2O2 = glutathione disulfide + 2 H2O. Multifunctional blue, copper-binding (6-7 atoms per molecule) glycoprotein. It has ferroxidase activity oxidizing Fe(2+) to Fe(3+) without releasing radical oxygen species. It is involved in iron transport across the cell membrane. Copper ions provide a large number of enzymatic activites. Oxidizes highly toxic ferrous ions to the ferric state for further incorporation onto apo-transferrins, catalyzes Cu(+) oxidation and promotes the oxidation of biogenic amines such as norepinephrin and serotonin. Provides Cu(2+) ions for the ascorbate-mediated deaminase degradation of the heparan sulfate chains of GPC1. Has glutathione peroxidase-like activity, can remove both hydrogen peroxide and lipid hydroperoxide in the presence of thiols. Also shows NO-oxidase and NO2 synthase activities that determine endocrine NO homeostasis. The sequence is that of Ceruloplasmin from Homo sapiens (Human).